Here is a 40-residue protein sequence, read N- to C-terminus: Potassium channel toxin alpha-KTx 12.2 (40 aa).

Intrachain disulfides connect Cys-2-Cys-5, Cys-10-Cys-31, Cys-16-Cys-36, and Cys-20-Cys-38.

The protein belongs to the short scorpion toxin superfamily. Potassium channel inhibitor family. Alpha-KTx 12 subfamily. In terms of tissue distribution, expressed by the venom gland.

Its subcellular location is the secreted. In terms of biological role, inhibits high conductance calcium-activated potassium channels. Reversibly inhibits Shaker B potassium channels. The chain is Potassium channel toxin alpha-KTx 12.2 from Tityus trivittatus (Argentinean scorpion).